Reading from the N-terminus, the 216-residue chain is Holliday junction branch migration complex subunit RuvA (216 aa).

Residues 1 to 64 form a domain I region; that stretch reads MISFIKGVLI…EDAQQLYGFK (64 aa). The domain II stretch occupies residues 65-143; that stretch reads SKVDKKVFQE…KMANEIYAQT (79 aa). The segment at 144-163 is flexible linker; the sequence is SGTTTTSQDSQAQQAPTSAV. The segment at 164 to 216 is domain III; sequence LANSIFNESVDALLALGYKQKDAEKMSRSAMGDATTAAEVIRKALQGSIRSKR.

Belongs to the RuvA family. In terms of assembly, homotetramer. Forms an RuvA(8)-RuvB(12)-Holliday junction (HJ) complex. HJ DNA is sandwiched between 2 RuvA tetramers; dsDNA enters through RuvA and exits via RuvB. An RuvB hexamer assembles on each DNA strand where it exits the tetramer. Each RuvB hexamer is contacted by two RuvA subunits (via domain III) on 2 adjacent RuvB subunits; this complex drives branch migration. In the full resolvosome a probable DNA-RuvA(4)-RuvB(12)-RuvC(2) complex forms which resolves the HJ.

It localises to the cytoplasm. The RuvA-RuvB-RuvC complex processes Holliday junction (HJ) DNA during genetic recombination and DNA repair, while the RuvA-RuvB complex plays an important role in the rescue of blocked DNA replication forks via replication fork reversal (RFR). RuvA specifically binds to HJ cruciform DNA, conferring on it an open structure. The RuvB hexamer acts as an ATP-dependent pump, pulling dsDNA into and through the RuvAB complex. HJ branch migration allows RuvC to scan DNA until it finds its consensus sequence, where it cleaves and resolves the cruciform DNA. The sequence is that of Holliday junction branch migration complex subunit RuvA from Francisella tularensis subsp. novicida (strain U112).